Consider the following 279-residue polypeptide: Tryptophan synthase alpha chain (279 aa).

Residues glutamate 50 and aspartate 61 each act as proton acceptor in the active site.

Belongs to the TrpA family. As to quaternary structure, tetramer of two alpha and two beta chains.

The catalysed reaction is (1S,2R)-1-C-(indol-3-yl)glycerol 3-phosphate + L-serine = D-glyceraldehyde 3-phosphate + L-tryptophan + H2O. Its pathway is amino-acid biosynthesis; L-tryptophan biosynthesis; L-tryptophan from chorismate: step 5/5. In terms of biological role, the alpha subunit is responsible for the aldol cleavage of indoleglycerol phosphate to indole and glyceraldehyde 3-phosphate. This chain is Tryptophan synthase alpha chain, found in Rhizobium rhizogenes (strain K84 / ATCC BAA-868) (Agrobacterium radiobacter).